We begin with the raw amino-acid sequence, 383 residues long: Lipid-A-disaccharide synthase (383 aa).

The protein belongs to the LpxB family.

The enzyme catalyses 2-N,3-O-bis[(3R)-3-hydroxytetradecanoyl]-alpha-D-glucosaminyl 1-phosphate + UDP-2-N,3-O-bis[(3R)-3-hydroxytetradecanoyl]-alpha-D-glucosamine = lipid A disaccharide (E. coli) + UDP + H(+). It carries out the reaction a lipid X + a UDP-2-N,3-O-bis[(3R)-3-hydroxyacyl]-alpha-D-glucosamine = a lipid A disaccharide + UDP + H(+). It functions in the pathway glycolipid biosynthesis; lipid IV(A) biosynthesis; lipid IV(A) from (3R)-3-hydroxytetradecanoyl-[acyl-carrier-protein] and UDP-N-acetyl-alpha-D-glucosamine: step 5/6. Its function is as follows. Condensation of UDP-2,3-diacylglucosamine and 2,3-diacylglucosamine-1-phosphate to form lipid A disaccharide, a precursor of lipid A, a phosphorylated glycolipid that anchors the lipopolysaccharide to the outer membrane of the cell. The protein is Lipid-A-disaccharide synthase of Pectobacterium carotovorum subsp. carotovorum (strain PC1).